The primary structure comprises 342 residues: Zinc transporter ZIP11 (342 aa).

7 consecutive transmembrane segments (helical) span residues 12–32, 44–64, 72–92, 194–214, 263–285, 290–307, and 322–342; these read LLGT…VFVF, LGFA…APAV, GFGA…AAFV, IALL…AVGV, FWYG…FAVV, ILPY…YVVM, and LASW…VGLG.

It belongs to the ZIP transporter (TC 2.A.5) family.

Its subcellular location is the cell membrane. It localises to the nucleus. It is found in the cytoplasm. The protein localises to the golgi apparatus. The enzyme catalyses Zn(2+)(in) = Zn(2+)(out). The catalysed reaction is Cu(2+)(in) = Cu(2+)(out). Functionally, zinc importer that regulates cytosolic zinc concentrations either via zinc influx from the extracellular compartment or efflux from intracellular organelles such as Golgi apparatus. May transport copper ions as well. The transport mechanism remains to be elucidated. This is Zinc transporter ZIP11 (SLC39A11) from Homo sapiens (Human).